The chain runs to 453 residues: Neuraminidase (453 aa).

Residues Met-1–Lys-6 lie on the Intravirion side of the membrane. The chain crosses the membrane as a helical span at residues Ile-7 to Gly-27. An involved in apical transport and lipid raft association region spans residues Gly-11–Trp-33. At Asn-28–Lys-453 the chain is on the virion surface side. Residues His-36 to Ser-74 are hypervariable stalk region. N-linked (GlcNAc...) asparagine; by host glycans are attached at residues Asn-44 and Asn-72. The tract at residues Leu-75–Lys-453 is head of neuraminidase. 8 cysteine pairs are disulfide-bonded: Cys-76–Cys-401, Cys-108–Cys-113, Cys-168–Cys-215, Cys-217–Cys-222, Cys-263–Cys-276, Cys-265–Cys-274, Cys-302–Cys-319, and Cys-405–Cys-430. Arg-102 provides a ligand contact to substrate. Asn-130 carries an N-linked (GlcNAc...) asparagine; by host glycan. Asp-135 acts as the Proton donor/acceptor in catalysis. Arg-136 is a binding site for substrate. N-linked (GlcNAc...) asparagine; by host glycosylation is present at Asn-219. Glu-261 to Glu-262 contacts substrate. Position 277 (Arg-277) interacts with substrate. Residues Asp-278, Gly-282, Asp-308, and Asn-328 each coordinate Ca(2+). Arg-352 contributes to the substrate binding site. Tyr-386 functions as the Nucleophile in the catalytic mechanism.

Belongs to the glycosyl hydrolase 34 family. In terms of assembly, homotetramer. Ca(2+) is required as a cofactor. Post-translationally, N-glycosylated.

Its subcellular location is the virion membrane. It localises to the host apical cell membrane. The catalysed reaction is Hydrolysis of alpha-(2-&gt;3)-, alpha-(2-&gt;6)-, alpha-(2-&gt;8)- glycosidic linkages of terminal sialic acid residues in oligosaccharides, glycoproteins, glycolipids, colominic acid and synthetic substrates.. With respect to regulation, inhibited by the neuraminidase inhibitors zanamivir (Relenza) and oseltamivir (Tamiflu). These drugs interfere with the release of progeny virus from infected cells and are effective against all influenza strains. Resistance to neuraminidase inhibitors is quite rare. Its function is as follows. Unlike other strains, A/WSN/33 neuraminidase binds and activates plasminogen into plasmin in the vicinity of HA so that activated plasmin cleaves HA rendering the virus infectious. Functionally, catalyzes the removal of terminal sialic acid residues from viral and cellular glycoconjugates. Cleaves off the terminal sialic acids on the glycosylated HA during virus budding to facilitate virus release. Additionally helps virus spread through the circulation by further removing sialic acids from the cell surface. These cleavages prevent self-aggregation and ensure the efficient spread of the progeny virus from cell to cell. Otherwise, infection would be limited to one round of replication. Described as a receptor-destroying enzyme because it cleaves a terminal sialic acid from the cellular receptors. May facilitate viral invasion of the upper airways by cleaving the sialic acid moieties on the mucin of the airway epithelial cells. Likely to plays a role in the budding process through its association with lipid rafts during intracellular transport. May additionally display a raft-association independent effect on budding. Plays a role in the determination of host range restriction on replication and virulence. Sialidase activity in late endosome/lysosome traffic seems to enhance virus replication. In Influenza A virus (strain A/Wilson-Smith/1933 H1N1) (Influenza A virus (strain A/WS/1933 H1N1)), this protein is Neuraminidase.